Here is a 317-residue protein sequence, read N- to C-terminus: Ribosomal protein L11 methyltransferase (317 aa).

S-adenosyl-L-methionine contacts are provided by Thr162, Gly183, Asp205, and Asn248.

The protein belongs to the methyltransferase superfamily. PrmA family.

Its subcellular location is the cytoplasm. It catalyses the reaction L-lysyl-[protein] + 3 S-adenosyl-L-methionine = N(6),N(6),N(6)-trimethyl-L-lysyl-[protein] + 3 S-adenosyl-L-homocysteine + 3 H(+). Functionally, methylates ribosomal protein L11. This chain is Ribosomal protein L11 methyltransferase, found in Alkaliphilus metalliredigens (strain QYMF).